The chain runs to 656 residues: Anion exchange transporter (656 aa).

Residues 1–75 (MTGAKRKKKS…LAFAVLSSVH (75 aa)) lie on the Cytoplasmic side of the membrane. Residues 76–96 (PVFGLYGSLFPAIIYAIFGMG) traverse the membrane as a helical segment. The Extracellular segment spans residues 97–144 (HHVATGTFALTSLISANAVERIVPQNMQNLTTQSNTSVLGLSDFEMQR). Residues 145 to 165 (IHVAAAVSFLGGVIQVAMFVL) traverse the membrane as a helical segment. Q166 is a topological domain (cytoplasmic). Residues 167–187 (LGSATFVVTEPVISAMTTGAA) traverse the membrane as a helical segment. Topologically, residues 188–202 (THVVTSQVKYLLGMK) are extracellular. Residues 203–223 (MPYISGPLGFFYIYAYVFENI) form a helical membrane-spanning segment. Over 224–227 (KSVR) the chain is Cytoplasmic. Residues 228–248 (LEALLLSLLSIVVLVLVKELN) traverse the membrane as a helical segment. Residues 249-254 (EQFKRK) are Extracellular-facing. Residues 255-275 (IKVVLPVDLVLIIAASFACYC) traverse the membrane as a helical segment. Over 276–306 (TNMENTYGLEVVGHIPQGIPSPRAPPMNILS) the chain is Cytoplasmic. The chain crosses the membrane as a helical span at residues 307 to 327 (AVITEAFGVALVGYVASLALA). Residues 328 to 343 (QGSAKKFKYSIDDNQE) are Extracellular-facing. Residues 344–364 (FLAHGLSNIVSSFFFCIPSAA) traverse the membrane as a helical segment. Topologically, residues 365–383 (AMGRTAGLYSTGAKTQVAC) are cytoplasmic. 2 helical membrane passes run 384-404 (LISC…LYWL) and 405-425 (PMCV…IQFR). At 426 to 448 (DLKKYWNVDKIDWGIWVSTYVFT) the chain is on the extracellular side. A helical transmembrane segment spans residues 449–469 (ICFAANVGLLFGVVCTIAIVI). Over 470–656 (GRFPRAMTVS…LSKLSDHSEV (187 aa)) the chain is Cytoplasmic. In terms of domain architecture, STAS spans 492–641 (TEMDSETLQQ…ESVSAAISHI (150 aa)). The interval 641 to 656 (IHSNKNLSKLSDHSEV) is membrane targeting.

Belongs to the SLC26A/SulP transporter (TC 2.A.53) family. In terms of tissue distribution, expressed in the thyroid gland (at protein level). Expressed in tonsillar high endothelial venule endothelial cells (HEVEC), placenta and in testis, expressed in a subgroup of basal cells in the epididymal ducts.

The protein resides in the basolateral cell membrane. The protein localises to the recycling endosome membrane. It localises to the apical cell membrane. Its subcellular location is the lateral cell membrane. It catalyses the reaction chloride(in) = chloride(out). It carries out the reaction iodide(out) = iodide(in). The catalysed reaction is bromide(in) = bromide(out). The enzyme catalyses oxalate(in) = oxalate(out). It catalyses the reaction nitrate(in) = nitrate(out). It carries out the reaction sulfate(in) = sulfate(out). The catalysed reaction is thiocyanate(in) = thiocyanate(out). The enzyme catalyses D-gluconate(in) = D-gluconate(out). It catalyses the reaction hydrogencarbonate(in) = hydrogencarbonate(out). It carries out the reaction hydrogencarbonate(in) + chloride(out) = hydrogencarbonate(out) + chloride(in). Is active at both alkaline and acidic pH. Activity is inhibited by 4,4'-Di-isothiocyanatostilbene-2,2'-disulfonic acid (DIDS - an inhibitor of several anion channels and transporters). In terms of biological role, acts as an anion channel mediating the transport of chloride, sulfate and oxalate ions. Mediates the transport of bromide, iodide, nitrate, gluconate, thiocyanate and bicarbonate ions. Its permeability towards bicarbonate is weak and increases when pH is above 7. Mediates thiocyanate transport in retinal pigment epithelium cells. Mediates iodide transport in the thyroid gland, playing an important role in the synthesis of thyroid hormones and the maintenance of thyroid function. Although it is an anion channel, according to PubMed:12736153 and PubMed:32119864 it has been shown to exhibit chloride-bicarbonate exchanger activity. This is Anion exchange transporter from Homo sapiens (Human).